The following is a 194-amino-acid chain: Cysteine and glycine-rich protein 2 (194 aa).

Residues 10-61 (CGACGRTVYHAEEVQCDGRSFHRCCFLCMVCRKNLDSTTVAIHDAEVYCKSC) enclose the LIM zinc-binding 1 domain. The Nuclear localization signal motif lies at 64 to 69 (KKYGPK). Residues 120 to 171 (CSRCGDSVYAAEKVIGAGKPWHKNCFRCAKCGKSLESTTLTEKEGEIYCKGC) form the LIM zinc-binding 2 domain.

The protein localises to the nucleus. Functionally, totally down-regulated in transformed cells. May therefore take part in the control of cell growth and differentiation. This Gallus gallus (Chicken) protein is Cysteine and glycine-rich protein 2 (CSRP2).